Consider the following 917-residue polypeptide: Hexokinase-1 (917 aa).

Residue Met-1 is modified to N-acetylmethionine. The mitochondrial-binding peptide (MBP) stretch occupies residues 1 to 10 (MIAAQLLAYY). Hexokinase domains lie at 16–458 (DDQV…MVTA) and 464–906 (AEQH…LITA). Residues Arg-30 and 84–89 (DLGGSS) contribute to the ATP site. The segment at 73 to 207 (DGSEKGDFIA…DYDANIVAVV (135 aa)) is hexokinase small subdomain 1. D-glucose 6-phosphate is bound at residue 84-91 (DLGGSSFR). Residues Ser-155, 172–173 (TK), and 208–209 (ND) contribute to the D-glucose site. Residues 208–447 (NDTVGTMMTC…SDVRFLLSES (240 aa)) form a hexokinase large subdomain 1 region. D-glucose 6-phosphate-binding residues include Asp-209 and Thr-232. D-glucose is bound by residues Asn-235, Glu-260, and 291–294 (QLFE). Phosphoserine is present on Ser-337. Residue Asn-345 coordinates ATP. 413 to 415 (DGS) provides a ligand contact to D-glucose 6-phosphate. 425–426 (RR) lines the ATP pocket. Residues Ser-449 and 532 to 536 (DLGGT) contribute to the D-glucose 6-phosphate site. The tract at residues 521-655 (DGTENGDFLA…EFDLDVVAVV (135 aa)) is hexokinase small subdomain 2. 532–537 (DLGGTN) contributes to the ATP binding site. D-glucose is bound by residues 603 to 604 (SF), 620 to 621 (TK), and 656 to 657 (ND). The interval 656 to 895 (NDTVGTMMTC…CNVSFLLSED (240 aa)) is hexokinase large subdomain 2. Residues Asp-657 and Thr-680 each contribute to the D-glucose 6-phosphate site. Thr-680 contacts ATP. Residues 682 to 683 (SN), Glu-708, and Glu-742 contribute to the D-glucose site. ATP contacts are provided by residues 747–748 (GM), 784–788 (TKFLS), and 863–867 (TLYKL). D-glucose 6-phosphate contacts are provided by residues 861-863 (DGT) and Ser-897.

This sequence belongs to the hexokinase family. Monomer. Interacts with RABL2/RABL2A; binds preferentially to GTP-bound RABL2. Interacts with VDAC1. The HK1-VDAC1 complex interacts with ATF2. Interacts (via N-terminal spermatogenic cell-specific region) with PFKM (via C-terminus). Interacts with SMAD5.

Its subcellular location is the mitochondrion outer membrane. The protein localises to the cytoplasm. The protein resides in the cytosol. It catalyses the reaction a D-hexose + ATP = a D-hexose 6-phosphate + ADP + H(+). The enzyme catalyses D-fructose + ATP = D-fructose 6-phosphate + ADP + H(+). The catalysed reaction is D-glucose + ATP = D-glucose 6-phosphate + ADP + H(+). It carries out the reaction D-mannose + ATP = D-mannose 6-phosphate + ADP + H(+). It catalyses the reaction D-glucosamine + ATP = D-glucosamine 6-phosphate + ADP + H(+). It functions in the pathway carbohydrate metabolism; hexose metabolism. The protein operates within carbohydrate degradation; glycolysis; D-glyceraldehyde 3-phosphate and glycerone phosphate from D-glucose: step 1/4. With respect to regulation, hexokinase is an allosteric enzyme inhibited by its product D-glucose 6-phosphate. Hexokinase activity is inhibited by N-acetyl-D-glucosamine. Functionally, catalyzes the phosphorylation of various hexoses, such as D-glucose, D-glucosamine, D-fructose, D-mannose and 2-deoxy-D-glucose, to hexose 6-phosphate (D-glucose 6-phosphate, D-glucosamine 6-phosphate, D-fructose 6-phosphate, D-mannose 6-phosphate and 2-deoxy-D-glucose 6-phosphate, respectively). Does not phosphorylate N-acetyl-D-glucosamine. Mediates the initial step of glycolysis by catalyzing phosphorylation of D-glucose to D-glucose 6-phosphate. Involved in innate immunity and inflammation by acting as a pattern recognition receptor for bacterial peptidoglycan. When released in the cytosol, N-acetyl-D-glucosamine component of bacterial peptidoglycan inhibits the hexokinase activity of HK1 and causes its dissociation from mitochondrial outer membrane, thereby activating the NLRP3 inflammasome. The polypeptide is Hexokinase-1 (Pongo abelii (Sumatran orangutan)).